A 333-amino-acid polypeptide reads, in one-letter code: Flotillin-like protein FloA (333 aa).

2 helical membrane-spanning segments follow: residues 8-28 (LMPI…FTFI) and 30-50 (VGLW…TLVG).

Belongs to the flotillin-like FloA family. Homooligomerizes.

The protein localises to the cell membrane. It localises to the membrane raft. Its function is as follows. Found in functional membrane microdomains (FMM) that may be equivalent to eukaryotic membrane rafts. FMMs are highly dynamic and increase in number as cells age. Flotillins are thought to be important factors in membrane fluidity. The polypeptide is Flotillin-like protein FloA (Desulfitobacterium hafniense (strain DSM 10664 / DCB-2)).